The primary structure comprises 337 residues: tRNA N6-adenosine threonylcarbamoyltransferase (337 aa).

Fe cation contacts are provided by His-111 and His-115. Substrate contacts are provided by residues 134-138, Asp-167, Gly-180, and Asn-272; that span reads LVSGG. Asp-300 contacts Fe cation.

It belongs to the KAE1 / TsaD family. Requires Fe(2+) as cofactor.

The protein resides in the cytoplasm. It catalyses the reaction L-threonylcarbamoyladenylate + adenosine(37) in tRNA = N(6)-L-threonylcarbamoyladenosine(37) in tRNA + AMP + H(+). In terms of biological role, required for the formation of a threonylcarbamoyl group on adenosine at position 37 (t(6)A37) in tRNAs that read codons beginning with adenine. Is involved in the transfer of the threonylcarbamoyl moiety of threonylcarbamoyl-AMP (TC-AMP) to the N6 group of A37, together with TsaE and TsaB. TsaD likely plays a direct catalytic role in this reaction. In Escherichia coli (strain SMS-3-5 / SECEC), this protein is tRNA N6-adenosine threonylcarbamoyltransferase.